The primary structure comprises 176 residues: Putative REP-associated tyrosine transposase (176 aa).

Residues His-59 and His-61 each coordinate Mg(2+). Tyr-148 functions as the Nucleophile in the catalytic mechanism.

Belongs to the transposase 17 family. RAYT subfamily. As to quaternary structure, homodimer. Mg(2+) serves as cofactor.

Transposase responsible for transposition an insertion sequence (IS) element. Transposition occurs in 2 main steps, excision from the donor DNA 'top strand' into a single strand circle and its subsequent reinsertion into the DNA target. This increases the copy number of the IS. This chain is Putative REP-associated tyrosine transposase, found in Haemophilus influenzae (strain ATCC 51907 / DSM 11121 / KW20 / Rd).